Reading from the N-terminus, the 276-residue chain is Homeobox protein TOS8 (276 aa).

Positions 176–185 are enriched in polar residues; the sequence is NSVRGSNNGY. The disordered stretch occupies residues 176 to 199; that stretch reads NSVRGSNNGYSAKEKKHKAHGKRS. Basic residues predominate over residues 189-199; that stretch reads EKKHKAHGKRS. Positions 194 to 256 form a DNA-binding region, homeobox; TALE-type; it reads AHGKRSNLPK…NARRRKIFSG (63 aa).

This sequence belongs to the TALE/CUP9 homeobox family.

It is found in the nucleus. The polypeptide is Homeobox protein TOS8 (TOS8) (Saccharomyces cerevisiae (strain ATCC 204508 / S288c) (Baker's yeast)).